A 251-amino-acid polypeptide reads, in one-letter code: Protein DEEPER ROOTING 1 (251 aa).

The IGT motif signature appears at S46–T52. Residues V64–Q105 are a coiled coil.

This sequence belongs to the LAZY family.

Involved in the control of root growth angle. Involved in cell elongation in the root tip that causes asymmetric root growth and downward bending of the root in response to gravity. The polypeptide is Protein DEEPER ROOTING 1 (Oryza sativa subsp. japonica (Rice)).